Here is a 263-residue protein sequence, read N- to C-terminus: Small ribosomal subunit protein bS1c (263 aa).

3 S1 motif domains span residues 27 to 96, 114 to 178, and 192 to 260; these read GDIV…LSIR, DSLL…LSHR, and GNII…LSMK.

It belongs to the bacterial ribosomal protein bS1 family.

The protein localises to the plastid. It is found in the chloroplast. In Porphyra purpurea (Red seaweed), this protein is Small ribosomal subunit protein bS1c (rps1).